The chain runs to 238 residues: Endothelin-3 (238 aa).

Residues 1-16 form the signal peptide; sequence MEPGLWLLFGLTVTSA. Residues 17–94 constitute a propeptide that is removed on maturation; that stretch reads AGFVPCSQSG…AEGAPEHHRS (78 aa). The segment at 24–89 is disordered; sequence QSGDAGRRGV…GQEQAAEGAP (66 aa). 2 disulfides stabilise this stretch: C97–C111 and C99–C107. Residues 118–238 constitute a propeptide that is removed on maturation; sequence INTPEQTVPY…PRCLFQEGAP (121 aa). The tract at residues 159–173 is endothelin-like; sequence CACVGRYDKACLHFC. The segment at 183-219 is disordered; that stretch reads SRTAEKTDKEEEGKVEVKDQQSKQALDLHHPKLMPGS. Residues 185 to 212 are compositionally biased toward basic and acidic residues; the sequence is TAEKTDKEEEGKVEVKDQQSKQALDLHH.

Belongs to the endothelin/sarafotoxin family. Expressed in trophoblasts and placental stem villi vessels, but not in cultured placental smooth muscle cells.

It is found in the secreted. Endothelins are endothelium-derived vasoconstrictor peptides. The protein is Endothelin-3 (EDN3) of Homo sapiens (Human).